Reading from the N-terminus, the 879-residue chain is Autophagy-related protein 9 (879 aa).

The segment at 1–56 is disordered; sequence MGKGEGYLDPTILSVASGSRNSGKGKERTRRKGGHKYHSLHVQDEEEEEPPESDAL. Residues 27–39 show a composition bias toward basic residues; the sequence is ERTRRKGGHKYHS. Residues 104 to 124 form a helical membrane-spanning segment; the sequence is VLNLLTTFFVIAFSTFLISCI. N-linked (GlcNAc...) asparagine glycosylation is found at N163 and N166. Residues 180–200 form a helical membrane-spanning segment; that stretch reads LFLIILSAFFIFQVASFAMSV. The stretch at 385–405 is an intramembrane region; that stretch reads FIFMGILNAIFAPFIILYLLI. 2 helical membrane passes run 455 to 475 and 488 to 508; these read FVAF…LIDP and TVLF…GMVP. The stretch at 555–575 is an intramembrane region; that stretch reads IMIFFSELLSVILTPFILFFS. 2 disordered regions span residues 620 to 666 and 763 to 825; these read ETGL…DWRG and WAKS…EEER. A compositionally biased stretch (low complexity) spans 632 to 657; the sequence is GPAADGFAAGKPSRPTTRRTTSSSPS. The segment covering 798–817 has biased composition (basic and acidic residues); it reads EGDKGDDSIDGWSKRVKTDG.

Belongs to the ATG9 family. As to quaternary structure, homotrimer; forms a homotrimer with a central pore that forms a path between the two membrane leaflets. Phosphorylated by ATG1. ATG1 phosphorylation is required for preautophagosome elongation.

It localises to the preautophagosomal structure membrane. The protein localises to the cytoplasmic vesicle membrane. Its subcellular location is the golgi apparatus membrane. The protein resides in the endoplasmic reticulum membrane. It catalyses the reaction a 1,2-diacyl-sn-glycero-3-phosphocholine(in) = a 1,2-diacyl-sn-glycero-3-phosphocholine(out). The enzyme catalyses a 1,2-diacyl-sn-glycero-3-phospho-L-serine(in) = a 1,2-diacyl-sn-glycero-3-phospho-L-serine(out). The catalysed reaction is a 1,2-diacyl-sn-glycero-3-phosphoethanolamine(in) = a 1,2-diacyl-sn-glycero-3-phosphoethanolamine(out). It carries out the reaction a 1,2-diacyl-sn-glycero-3-phospho-(1D-myo-inositol-3-phosphate)(in) = a 1,2-diacyl-sn-glycero-3-phospho-(1D-myo-inositol-3-phosphate)(out). Its function is as follows. Phospholipid scramblase involved in autophagy and cytoplasm to vacuole transport (Cvt) vesicle formation. Cycles between the preautophagosomal structure/phagophore assembly site (PAS) and the cytoplasmic vesicle pool and supplies membrane for the growing autophagosome. Lipid scramblase activity plays a key role in preautophagosomal structure/phagophore assembly by distributing the phospholipids that arrive through ATG2 from the cytoplasmic to the luminal leaflet of the bilayer, thereby driving autophagosomal membrane expansion. Required for mitophagy. Also involved in endoplasmic reticulum-specific autophagic process and is essential for the survival of cells subjected to severe ER stress. Different machineries are required for anterograde trafficking to the PAS during either the Cvt pathway or bulk autophagy and for retrograde trafficking. The chain is Autophagy-related protein 9 (ATG9) from Cryptococcus neoformans var. neoformans serotype D (strain B-3501A) (Filobasidiella neoformans).